The primary structure comprises 244 residues: Dehydration-responsive element-binding protein 2E (244 aa).

Residues 1–25 are disordered; the sequence is MEKEDNGSKQSSSASVVSSRRRRRV. The Nuclear localization signal motif lies at 20–46; the sequence is RRRRRVVEPVEATLQRWEEEGLARARR. Positions 69–134 form a DNA-binding region, AP2/ERF; it reads RFRGVRQRVW…YGPYARLNFP (66 aa).

It belongs to the AP2/ERF transcription factor family. ERF subfamily. In terms of tissue distribution, expressed in xylem tissues, stigma, anthers and region where sepals and petals attach the peduncle.

The protein resides in the nucleus. Its function is as follows. Transcriptional activator that binds specifically to the DNA sequence 5'-[AG]CCGAC-3'. Binding to the C-repeat/DRE element mediates abscisic acid-inducible transcription. Involved in the regulation of plant development and tolerance to abiotic stresses. The sequence is that of Dehydration-responsive element-binding protein 2E (DREB2E) from Arabidopsis thaliana (Mouse-ear cress).